Consider the following 298-residue polypeptide: Probable GTP 3',8-cyclase (298 aa).

A Radical SAM core domain is found at 4–227; the sequence is RYGREIRSFR…MQNRKKYVID (224 aa). Arginine 13 contacts GTP. 2 residues coordinate [4Fe-4S] cluster: cysteine 20 and cysteine 24. Tyrosine 26 serves as a coordination point for S-adenosyl-L-methionine. Position 27 (cysteine 27) interacts with [4Fe-4S] cluster. Lysine 61 lines the GTP pocket. Position 65 (glycine 65) interacts with S-adenosyl-L-methionine. Residue threonine 91 participates in GTP binding. An S-adenosyl-L-methionine-binding site is contributed by serine 115. Lysine 152 contributes to the GTP binding site. [4Fe-4S] cluster contacts are provided by cysteine 243 and cysteine 246. 248-250 is a GTP binding site; that stretch reads RIR. Residue cysteine 260 participates in [4Fe-4S] cluster binding.

It belongs to the radical SAM superfamily. MoaA family. [4Fe-4S] cluster is required as a cofactor.

It catalyses the reaction GTP + AH2 + S-adenosyl-L-methionine = (8S)-3',8-cyclo-7,8-dihydroguanosine 5'-triphosphate + 5'-deoxyadenosine + L-methionine + A + H(+). The protein operates within cofactor biosynthesis; molybdopterin biosynthesis. Catalyzes the cyclization of GTP to (8S)-3',8-cyclo-7,8-dihydroguanosine 5'-triphosphate. This chain is Probable GTP 3',8-cyclase, found in Methanococcus maripaludis (strain C6 / ATCC BAA-1332).